We begin with the raw amino-acid sequence, 265 residues long: 2-C-methyl-D-erythritol 4-phosphate cytidylyltransferase (265 aa).

A compositionally biased stretch (basic and acidic residues) spans 231–241; that stretch reads DRGGASREAER. The interval 231–265 is disordered; it reads DRGGASREAERSAMPSAATSVFSGARSAASGSEEV. Residues 253–265 are compositionally biased toward low complexity; sequence SGARSAASGSEEV.

It belongs to the IspD/TarI cytidylyltransferase family. IspD subfamily.

The enzyme catalyses 2-C-methyl-D-erythritol 4-phosphate + CTP + H(+) = 4-CDP-2-C-methyl-D-erythritol + diphosphate. The protein operates within isoprenoid biosynthesis; isopentenyl diphosphate biosynthesis via DXP pathway; isopentenyl diphosphate from 1-deoxy-D-xylulose 5-phosphate: step 2/6. Catalyzes the formation of 4-diphosphocytidyl-2-C-methyl-D-erythritol from CTP and 2-C-methyl-D-erythritol 4-phosphate (MEP). The sequence is that of 2-C-methyl-D-erythritol 4-phosphate cytidylyltransferase from Xanthomonas campestris pv. campestris (strain 8004).